Reading from the N-terminus, the 159-residue chain is Ribosomal RNA large subunit methyltransferase H (159 aa).

S-adenosyl-L-methionine is bound by residues Gly108 and 127–132; that span reads FGKLTM.

This sequence belongs to the RNA methyltransferase RlmH family. In terms of assembly, homodimer.

It is found in the cytoplasm. The catalysed reaction is pseudouridine(1915) in 23S rRNA + S-adenosyl-L-methionine = N(3)-methylpseudouridine(1915) in 23S rRNA + S-adenosyl-L-homocysteine + H(+). Its function is as follows. Specifically methylates the pseudouridine at position 1915 (m3Psi1915) in 23S rRNA. The sequence is that of Ribosomal RNA large subunit methyltransferase H from Lactobacillus acidophilus (strain ATCC 700396 / NCK56 / N2 / NCFM).